A 617-amino-acid polypeptide reads, in one-letter code: Threonine--tRNA ligase (617 aa).

Residues 209-502 (DHRRLGKDLD…MTENYAGDFP (294 aa)) form a catalytic region. Zn(2+) is bound by residues Cys-302, His-353, and His-479.

It belongs to the class-II aminoacyl-tRNA synthetase family. In terms of assembly, homodimer. It depends on Zn(2+) as a cofactor.

The protein resides in the cytoplasm. The enzyme catalyses tRNA(Thr) + L-threonine + ATP = L-threonyl-tRNA(Thr) + AMP + diphosphate + H(+). Catalyzes the attachment of threonine to tRNA(Thr) in a two-step reaction: L-threonine is first activated by ATP to form Thr-AMP and then transferred to the acceptor end of tRNA(Thr). Also edits incorrectly charged L-seryl-tRNA(Thr). This is Threonine--tRNA ligase from Synechococcus sp. (strain CC9311).